A 547-amino-acid chain; its full sequence is Nitrosoguanidine resistance protein SNG1 (547 aa).

Positions 35–86 (NQRFAEGSGHSSDLAKSLEDYRPPDEKPSSLSSVGEGGANEEEKGGNDGGPL) are disordered. The span at 50 to 62 (KSLEDYRPPDEKP) shows a compositional bias: basic and acidic residues. Position 91 is a phosphothreonine (Thr-91). 8 helical membrane passes run 109–129 (FVLN…IYWG), 159–179 (ISAI…IYNA), 318–338 (ILMA…VLQL), 363–383 (LISW…SAIF), 394–414 (GGFV…GGAN), 418–438 (LSLV…TWII), 457–477 (YGYI…FLNL), and 488–508 (ILVA…KFAG). Residues 526 to 536 (ATQRASRPAEA) show a composition bias toward low complexity. The segment at 526-547 (ATQRASRPAEANTDKNNNPPGN) is disordered.

The protein to yeast YJR015W.

It localises to the membrane. Its function is as follows. May function as a N-methyl-N'nitro-N-nitrosoguanidine (MNNG) export permease. This Saccharomyces cerevisiae (strain ATCC 204508 / S288c) (Baker's yeast) protein is Nitrosoguanidine resistance protein SNG1 (SNG1).